A 260-amino-acid polypeptide reads, in one-letter code: Protein FAM220A (260 aa).

2 disordered regions span residues Met-1–Ser-75 and Gly-129–Gly-158. Over residues Arg-35–Asp-47 the composition is skewed to polar residues.

As to quaternary structure, interacts with transcriptional activator STAT3; the interaction occurs in both the nucleus and the cytoplasm, is enhanced by IL6 and promotes STAT3 dephosphorylation, leading to negative regulation of STAT3 transcriptional activator activity. Can interact with both unphosphorylated and phosphorylated STAT3 but interacts preferentially with phosphorylated STAT3 in the nucleus. Interacts with protein phosphatase PTPN2/TC45; this promotes interaction of PTPN2 with STAT3, leading to dephosphorylation of STAT3 by PTPN2. Expressed at high levels in the testis where it is detected within elongated spermatids during the late stages (steps 9-16) of haploid germ cell development and in the tubular lumen (at protein level).

Its subcellular location is the nucleus. It is found in the cytoplasm. The protein localises to the cytoplasmic vesicle. The protein resides in the secretory vesicle. It localises to the acrosome. Its function is as follows. Promotes dephosphorylation of transcriptional activator STAT3 by interacting with both STAT3 and protein phosphatase PTPN2. This promotes interaction of PTPN2 with STAT3 and mediates STAT3 dephosphorylation by PTPN2, leading to negative regulation of STAT3 transcriptional activator activity. May be required for spermiogenesis or sperm function. This chain is Protein FAM220A, found in Mus musculus (Mouse).